The sequence spans 280 residues: UPF0494 membrane protein C750.06c (280 aa).

A run of 4 helical transmembrane segments spans residues 107–127 (WPLL…KFEV), 144–164 (IWVP…SLIF), 178–198 (VIIA…GMII), and 199–219 (AALG…LYFG).

It belongs to the UPF0494 family.

Its subcellular location is the cytoplasm. It is found in the vacuole. The protein resides in the membrane. This is UPF0494 membrane protein C750.06c from Schizosaccharomyces pombe (strain 972 / ATCC 24843) (Fission yeast).